We begin with the raw amino-acid sequence, 474 residues long: Bifunctional protein HldE (474 aa).

Positions 1–318 (MKLSMPRFDQ…RAVQREQGSE (318 aa)) are ribokinase. 194 to 197 (NLSE) is a binding site for ATP. The active site involves aspartate 263. The cytidylyltransferase stretch occupies residues 343-474 (FTNGCFDILH…AIVEKIRQKG (132 aa)).

This sequence in the N-terminal section; belongs to the carbohydrate kinase PfkB family. In the C-terminal section; belongs to the cytidylyltransferase family. In terms of assembly, homodimer.

It catalyses the reaction D-glycero-beta-D-manno-heptose 7-phosphate + ATP = D-glycero-beta-D-manno-heptose 1,7-bisphosphate + ADP + H(+). The enzyme catalyses D-glycero-beta-D-manno-heptose 1-phosphate + ATP + H(+) = ADP-D-glycero-beta-D-manno-heptose + diphosphate. It functions in the pathway nucleotide-sugar biosynthesis; ADP-L-glycero-beta-D-manno-heptose biosynthesis; ADP-L-glycero-beta-D-manno-heptose from D-glycero-beta-D-manno-heptose 7-phosphate: step 1/4. The protein operates within nucleotide-sugar biosynthesis; ADP-L-glycero-beta-D-manno-heptose biosynthesis; ADP-L-glycero-beta-D-manno-heptose from D-glycero-beta-D-manno-heptose 7-phosphate: step 3/4. It participates in bacterial outer membrane biogenesis; LPS core biosynthesis. In terms of biological role, catalyzes the phosphorylation of D-glycero-D-manno-heptose 7-phosphate at the C-1 position to selectively form D-glycero-beta-D-manno-heptose-1,7-bisphosphate. Functionally, catalyzes the ADP transfer from ATP to D-glycero-beta-D-manno-heptose 1-phosphate, yielding ADP-D-glycero-beta-D-manno-heptose. This is Bifunctional protein HldE from Pseudomonas aeruginosa (strain ATCC 15692 / DSM 22644 / CIP 104116 / JCM 14847 / LMG 12228 / 1C / PRS 101 / PAO1).